We begin with the raw amino-acid sequence, 280 residues long: Diaminopimelate epimerase (280 aa).

2 residues coordinate substrate: Asn14 and Asn67. Cys76 functions as the Proton donor in the catalytic mechanism. Residues Gly77–Asn78, Asn193, and Glu210–Arg211 contribute to the substrate site. Cys220 serves as the catalytic Proton acceptor. Residue Gly221–Thr222 participates in substrate binding.

It belongs to the diaminopimelate epimerase family. As to quaternary structure, homodimer.

The protein resides in the cytoplasm. The enzyme catalyses (2S,6S)-2,6-diaminopimelate = meso-2,6-diaminopimelate. It functions in the pathway amino-acid biosynthesis; L-lysine biosynthesis via DAP pathway; DL-2,6-diaminopimelate from LL-2,6-diaminopimelate: step 1/1. Functionally, catalyzes the stereoinversion of LL-2,6-diaminopimelate (L,L-DAP) to meso-diaminopimelate (meso-DAP), a precursor of L-lysine. This chain is Diaminopimelate epimerase, found in Methanocella arvoryzae (strain DSM 22066 / NBRC 105507 / MRE50).